A 499-amino-acid polypeptide reads, in one-letter code: ATP synthase subunit alpha, chloroplastic (499 aa).

170–177 (GDRQTGKT) is a binding site for ATP.

The protein belongs to the ATPase alpha/beta chains family. F-type ATPases have 2 components, CF(1) - the catalytic core - and CF(0) - the membrane proton channel. CF(1) has five subunits: alpha(3), beta(3), gamma(1), delta(1), epsilon(1). CF(0) has four main subunits: a, b, b' and c.

The protein localises to the plastid. Its subcellular location is the chloroplast thylakoid membrane. It catalyses the reaction ATP + H2O + 4 H(+)(in) = ADP + phosphate + 5 H(+)(out). Its function is as follows. Produces ATP from ADP in the presence of a proton gradient across the membrane. The alpha chain is a regulatory subunit. In Emiliania huxleyi (Coccolithophore), this protein is ATP synthase subunit alpha, chloroplastic.